Here is an 88-residue protein sequence, read N- to C-terminus: Small ribosomal subunit protein uS17 (88 aa).

This sequence belongs to the universal ribosomal protein uS17 family. As to quaternary structure, part of the 30S ribosomal subunit.

Its function is as follows. One of the primary rRNA binding proteins, it binds specifically to the 5'-end of 16S ribosomal RNA. The sequence is that of Small ribosomal subunit protein uS17 from Vesicomyosocius okutanii subsp. Calyptogena okutanii (strain HA).